The following is a 264-amino-acid chain: Heavy metal-associated isoprenylated plant protein 17 (264 aa).

HMA domains follow at residues 32-95 (VTDA…KKIE) and 133-204 (IMEV…KERQ). Positions 185–218 (SRKLNKKMHQKIKKAEKERQEWESEMMLREAEEE) form a coiled coil. Cys-261 carries the post-translational modification Cysteine methyl ester. Cys-261 carries S-farnesyl cysteine lipidation. Positions 262–264 (SIS) are cleaved as a propeptide — removed in mature form.

The protein belongs to the HIPP family.

Its function is as follows. Probable heavy-metal-binding protein. The sequence is that of Heavy metal-associated isoprenylated plant protein 17 from Arabidopsis thaliana (Mouse-ear cress).